The primary structure comprises 399 residues: Tryptophan synthase beta chain (399 aa).

The residue at position 92 (Lys-92) is an N6-(pyridoxal phosphate)lysine.

Belongs to the TrpB family. Tetramer of two alpha and two beta chains. It depends on pyridoxal 5'-phosphate as a cofactor.

It catalyses the reaction (1S,2R)-1-C-(indol-3-yl)glycerol 3-phosphate + L-serine = D-glyceraldehyde 3-phosphate + L-tryptophan + H2O. It functions in the pathway amino-acid biosynthesis; L-tryptophan biosynthesis; L-tryptophan from chorismate: step 5/5. In terms of biological role, the beta subunit is responsible for the synthesis of L-tryptophan from indole and L-serine. This Legionella pneumophila (strain Paris) protein is Tryptophan synthase beta chain.